The following is a 216-amino-acid chain: MATKLTERQQEILDLIRQTVARTGFPPTRAEIAQALGFRSPNAAEDHLKALARKGAIELTAGASRGIRLKVPDNAAPSAQLTHPLLAQLVLPLVGRVAAGSPILASEHVEREVGVDPGLFTQTPDYLLKVRGMSMRDAGILEGDLLAVKRAAEARNGQIVVARLGDEVTVKRLQRQNGRIELLPENPDFSPIVVANTDDFALEGIAVGLIRTQPLH.

A DNA-binding region (H-T-H motif) is located at residues 29 to 49 (RAEIAQALGFRSPNAAEDHLK). Residues Ser-134 and Lys-171 each act as for autocatalytic cleavage activity in the active site.

The protein belongs to the peptidase S24 family. As to quaternary structure, homodimer.

The enzyme catalyses Hydrolysis of Ala-|-Gly bond in repressor LexA.. Functionally, represses a number of genes involved in the response to DNA damage (SOS response), including recA and lexA. In the presence of single-stranded DNA, RecA interacts with LexA causing an autocatalytic cleavage which disrupts the DNA-binding part of LexA, leading to derepression of the SOS regulon and eventually DNA repair. The protein is LexA repressor of Bordetella parapertussis (strain 12822 / ATCC BAA-587 / NCTC 13253).